The sequence spans 309 residues: 2-phospho-L-lactate transferase (309 aa).

7,8-didemethyl-8-hydroxy-5-deazariboflavin contacts are provided by D50 and K89.

It belongs to the CofD family. Homodimer. Requires Mg(2+) as cofactor.

It catalyses the reaction (2S)-lactyl-2-diphospho-5'-guanosine + 7,8-didemethyl-8-hydroxy-5-deazariboflavin = oxidized coenzyme F420-0 + GMP + H(+). The protein operates within cofactor biosynthesis; coenzyme F420 biosynthesis. Functionally, catalyzes the transfer of the 2-phospholactate moiety from (2S)-lactyl-2-diphospho-5'-guanosine to 7,8-didemethyl-8-hydroxy-5-deazariboflavin (FO) with the formation of oxidized coenzyme F420-0 and GMP. The chain is 2-phospho-L-lactate transferase from Methanococcus maripaludis (strain C7 / ATCC BAA-1331).